The chain runs to 106 residues: L-rhamnose mutarotase (106 aa).

Y20 lines the substrate pocket. H24 (proton donor) is an active-site residue. Substrate-binding positions include Y43 and 78-79; that span reads WW.

It belongs to the rhamnose mutarotase family. As to quaternary structure, homodimer.

The protein resides in the cytoplasm. The enzyme catalyses alpha-L-rhamnose = beta-L-rhamnose. Its pathway is carbohydrate metabolism; L-rhamnose metabolism. Involved in the anomeric conversion of L-rhamnose. The chain is L-rhamnose mutarotase from Leptothrix cholodnii (strain ATCC 51168 / LMG 8142 / SP-6) (Leptothrix discophora (strain SP-6)).